Here is a 641-residue protein sequence, read N- to C-terminus: MNKKTFYITTPIYYPSAKLHIGNTYTTVAADALARFKRLTGHDVLFLTGTDEHGQKIQRVAEEKGLKPKEYLDNMVDSIKELWKSMNISYDKFIRTTDDYHIESVQKIFKKLYEQGDIYKGEYEGWYCTPCESFWTESQLDDHNCPDCGRPVEKTKEEAYFFKMSKYADRLIKYIEENPHFIQPESRKNEMLNNFLKPGLQDLCISRTSFDWGIPVSFDNKHVIYVWIDALSNYITALGYNSDNQELLEKFWPANVHLVGKDILRFHTIYWPIMLMALGIELPKQVFGHGWLLVDGGKMSKSKGNVVDPVVLVDHFGEDTVRYYLLREIPFGSDGLFNNELFIKKINSDLANDLGNLLSRTVAMVQKYFNGIMPAPIAKEPIDDELINLALDTREKVENNMEKLKIPEVLDEIWTLIGRANKYIDETTPWILAKDEDKKDRLGTVLYNLSETLRIISVLISAFIPKTSERINEQLNVDLTTWDSIASFDGTKAGTKVVKGDALFPRIDVEAKIEELNSLKEKKEKKEIKPIKEEITIDDFDKIDLRVVKVISCEPVKGAKKLLKLKVDLGGEERQVISGIAQYYKPEELVGKSVVLVANLKPAKLRGELSQGMILAAATDDDSKLFTVSIPGELPTGSQVR.

The 'HIGH' region motif lies at 13 to 23; that stretch reads YYPSAKLHIGN. Positions 128, 131, 145, and 148 each coordinate Zn(2+). The 'KMSKS' region signature appears at 298-302; it reads KMSKS. Lys301 provides a ligand contact to ATP. Positions 539 to 641 constitute a tRNA-binding domain; the sequence is DFDKIDLRVV…GELPTGSQVR (103 aa).

The protein belongs to the class-I aminoacyl-tRNA synthetase family. MetG type 2A subfamily. In terms of assembly, homodimer. Zn(2+) is required as a cofactor.

The protein resides in the cytoplasm. The enzyme catalyses tRNA(Met) + L-methionine + ATP = L-methionyl-tRNA(Met) + AMP + diphosphate. Its function is as follows. Is required not only for elongation of protein synthesis but also for the initiation of all mRNA translation through initiator tRNA(fMet) aminoacylation. This chain is Methionine--tRNA ligase, found in Clostridium tetani (strain Massachusetts / E88).